A 257-amino-acid polypeptide reads, in one-letter code: Gamma-secretase subunit APH-1B (257 aa).

7 helical membrane passes run 5 to 25, 32 to 52, 71 to 91, 115 to 135, 158 to 178, 186 to 206, and 213 to 233; these read VFFG…VFTI, IIFL…SSLV, LLIF…FAYY, LLAY…SFVN, YSAF…IVFF, WGIL…TFIS, and LASA…AAGG.

The protein belongs to the APH-1 family. Probable component of the gamma-secretase complex, a complex composed of a presenilin homodimer (PSEN1 or PSEN2), nicastrin (NCSTN), APH1 (APH1A or APH1B) and PEN2. Such minimal complex is sufficient for secretase activity, although other components may exist. Interacts with PSEN1 and PSEN2. As to expression, weakly or not expressed in leukocytes, lung, placenta, small intestine, liver, kidney, spleen thymus, colon, skeletal muscle, heart and brain.

Its subcellular location is the membrane. Its function is as follows. Probable subunit of the gamma-secretase complex, an endoprotease complex that catalyzes the intramembrane cleavage of integral proteins such as Notch receptors and APP (amyloid-beta precursor protein). It probably represents a stabilizing cofactor for the presenilin homodimer that promotes the formation of a stable complex. Probably present in a minority of gamma-secretase complexes compared to APH1A. The protein is Gamma-secretase subunit APH-1B (APH1B) of Homo sapiens (Human).